A 146-amino-acid polypeptide reads, in one-letter code: Hemoglobin subunit beta (146 aa).

Val1 carries the post-translational modification N-acetylvaline. In terms of domain architecture, Globin spans 2–146 (HLTAEEKNAI…VANALAHKYH (145 aa)). Thr12 is modified (phosphothreonine). Lys59 carries the post-translational modification N6-acetyllysine. His63 contacts heme b. Position 82 is an N6-acetyllysine (Lys82). Residue His92 participates in heme b binding. Cys93 is modified (S-nitrosocysteine). An N6-acetyllysine modification is found at Lys144.

Belongs to the globin family. In terms of assembly, heterotetramer of two alpha chains and two beta chains. As to expression, red blood cells.

In terms of biological role, involved in oxygen transport from the lung to the various peripheral tissues. This Osphranter rufus (Red kangaroo) protein is Hemoglobin subunit beta (HBB).